Here is a 105-residue protein sequence, read N- to C-terminus: Ketoisovalerate oxidoreductase subunit VorD (105 aa).

4Fe-4S ferredoxin-type domains follow at residues 44-73 (FMPV…IKED) and 74-103 (GFVA…MVRE). [4Fe-4S] cluster-binding residues include Cys-53, Cys-56, Cys-59, Cys-63, Cys-83, Cys-86, Cys-89, and Cys-93.

In terms of assembly, heterotetramer of one alpha, one beta, one delta and one gamma chain. The cofactor is [4Fe-4S] cluster.

The enzyme catalyses 3-methyl-2-oxobutanoate + 2 oxidized [2Fe-2S]-[ferredoxin] + CoA = 2-methylpropanoyl-CoA + 2 reduced [2Fe-2S]-[ferredoxin] + CO2 + H(+). The polypeptide is Ketoisovalerate oxidoreductase subunit VorD (vorD) (Pyrococcus horikoshii (strain ATCC 700860 / DSM 12428 / JCM 9974 / NBRC 100139 / OT-3)).